Consider the following 101-residue polypeptide: Large ribosomal subunit protein bL28 (101 aa).

Belongs to the bacterial ribosomal protein bL28 family.

The chain is Large ribosomal subunit protein bL28 from Caulobacter sp. (strain K31).